We begin with the raw amino-acid sequence, 160 residues long: ATP synthase subunit b (160 aa).

Residues 5–27 (IEQILTQIIAFLIMLGVLKKFVW) traverse the membrane as a helical segment.

This sequence belongs to the ATPase B chain family. As to quaternary structure, F-type ATPases have 2 components, F(1) - the catalytic core - and F(0) - the membrane proton channel. F(1) has five subunits: alpha(3), beta(3), gamma(1), delta(1), epsilon(1). F(0) has three main subunits: a(1), b(2) and c(10-14). The alpha and beta chains form an alternating ring which encloses part of the gamma chain. F(1) is attached to F(0) by a central stalk formed by the gamma and epsilon chains, while a peripheral stalk is formed by the delta and b chains.

It localises to the cell inner membrane. F(1)F(0) ATP synthase produces ATP from ADP in the presence of a proton or sodium gradient. F-type ATPases consist of two structural domains, F(1) containing the extramembraneous catalytic core and F(0) containing the membrane proton channel, linked together by a central stalk and a peripheral stalk. During catalysis, ATP synthesis in the catalytic domain of F(1) is coupled via a rotary mechanism of the central stalk subunits to proton translocation. In terms of biological role, component of the F(0) channel, it forms part of the peripheral stalk, linking F(1) to F(0). This Protochlamydia amoebophila (strain UWE25) protein is ATP synthase subunit b.